The sequence spans 1083 residues: Ubiquitin carboxyl-terminal hydrolase 28 (1083 aa).

The segment at 60-82 (DQRVKEPSHDTAATEPSEVEESA) is disordered. Phosphoserine is present on Ser67. The UIM domain occupies 97–116 (DNKDDLQAAIALSLLESPNI). Lys99 is covalently cross-linked (Glycyl lysine isopeptide (Lys-Gly) (interchain with G-Cter in SUMO2)). The region spanning 162–656 (VGLKNVGNTC…SAYCLMYIND (495 aa)) is the USP domain. Cys171 serves as the catalytic Nucleophile. Ser376 bears the Phosphoserine mark. Residues 483–539 (DLTAKESSSPKSCSQNAEGSFSSPEDALPNSEVMNGPFTSPHSSLEMPAPPPAPRTV) are disordered. The segment covering 487–505 (KESSSPKSCSQNAEGSFSS) has biased composition (polar residues). Ser556 carries the post-translational modification Phosphoserine. The active-site Proton acceptor is His606. The interval 703 to 728 (EEQSCKIPQMESSPNSSSQDFSTSQE) is disordered. Residues 714–728 (SSPNSSSQDFSTSQE) show a composition bias toward low complexity. Ser720 carries the post-translational modification Phosphoserine. Position 1054 is a phosphothreonine (Thr1054).

It belongs to the peptidase C19 family. USP28 subfamily. Interacts with ZNF304. Interacts with PRKD1. Interacts with TP53BP1. Interacts with FBXW7; following DNA damage, dissociates from FBXW7 leading to degradation of MYC. In terms of processing, degraded upon nickel ion level or hypoxia exposure. Post-translationally, phosphorylated upon DNA damage at Ser-67 and Ser-720, by ATM or ATR. Phosphorylated by PRKD1.

It localises to the nucleus. The protein resides in the nucleoplasm. It carries out the reaction Thiol-dependent hydrolysis of ester, thioester, amide, peptide and isopeptide bonds formed by the C-terminal Gly of ubiquitin (a 76-residue protein attached to proteins as an intracellular targeting signal).. Functionally, deubiquitinase involved in DNA damage response checkpoint and MYC proto-oncogene stability. Involved in DNA damage induced apoptosis by specifically deubiquitinating proteins of the DNA damage pathway such as CLSPN. Also involved in G2 DNA damage checkpoint, by deubiquitinating CLSPN, and preventing its degradation by the anaphase promoting complex/cyclosome (APC/C). In contrast, it does not deubiquitinate PLK1. Specifically deubiquitinates MYC in the nucleoplasm, leading to prevent MYC degradation by the proteasome: acts by specifically interacting with FBXW7 (FBW7alpha) in the nucleoplasm and counteracting ubiquitination of MYC by the SCF(FBXW7) complex. Deubiquitinates ZNF304, hence preventing ZNF304 degradation by the proteasome and leading to the activated KRAS-mediated promoter hypermethylation and transcriptional silencing of tumor suppressor genes (TSGs) in a subset of colorectal cancers (CRC) cells. The polypeptide is Ubiquitin carboxyl-terminal hydrolase 28 (Usp28) (Rattus norvegicus (Rat)).